The following is a 303-amino-acid chain: Recombination-associated protein RdgC (303 aa).

The protein belongs to the RdgC family.

It localises to the cytoplasm. It is found in the nucleoid. In terms of biological role, may be involved in recombination. The sequence is that of Recombination-associated protein RdgC from Salmonella agona (strain SL483).